Consider the following 280-residue polypeptide: Putative pyruvate, phosphate dikinase regulatory protein (280 aa).

153-160 (GISRTSKT) contributes to the ADP binding site.

It belongs to the pyruvate, phosphate/water dikinase regulatory protein family. PDRP subfamily.

The catalysed reaction is N(tele)-phospho-L-histidyl/L-threonyl-[pyruvate, phosphate dikinase] + ADP = N(tele)-phospho-L-histidyl/O-phospho-L-threonyl-[pyruvate, phosphate dikinase] + AMP + H(+). It carries out the reaction N(tele)-phospho-L-histidyl/O-phospho-L-threonyl-[pyruvate, phosphate dikinase] + phosphate + H(+) = N(tele)-phospho-L-histidyl/L-threonyl-[pyruvate, phosphate dikinase] + diphosphate. In terms of biological role, bifunctional serine/threonine kinase and phosphorylase involved in the regulation of the pyruvate, phosphate dikinase (PPDK) by catalyzing its phosphorylation/dephosphorylation. The polypeptide is Putative pyruvate, phosphate dikinase regulatory protein (Bartonella quintana (strain Toulouse) (Rochalimaea quintana)).